Here is a 152-residue protein sequence, read N- to C-terminus: ESAT-6 secretion machinery protein EssA (152 aa).

The Cytoplasmic portion of the chain corresponds to 1-114 (MLMNSVIALT…PYIQNKQEKK (114 aa)). Residues 62-83 (ERQQQIKNDMFQNQASHSTRLN) are disordered. Residues 66 to 80 (QIKNDMFQNQASHST) are compositionally biased toward polar residues. The helical transmembrane segment at 115–135 (IFPYILMSVGAFLTLGFVIFS) threads the bilayer. Residues 136–152 (IHKGRRTKNESARKSNI) lie on the Extracellular side of the membrane.

This sequence belongs to the EssA family.

It localises to the cell membrane. Its function is as follows. Component of the ESAT-6 secretion system (Ess). Required for the secretion of EsxA and EsxB. In Staphylococcus aureus (strain COL), this protein is ESAT-6 secretion machinery protein EssA.